The following is a 90-amino-acid chain: Antitoxin VapB35 (90 aa).

Residues 53-90 form a disordered region; that stretch reads GSVQPARVHGPAPRPTIPMRGGLDSGTLLERMRAEERY.

The protein belongs to the phD/YefM antitoxin family.

In terms of biological role, antitoxin component of a type II toxin-antitoxin (TA) system. Neutralizes the effect of cognate toxin VapC35. The sequence is that of Antitoxin VapB35 (vapB35) from Mycobacterium tuberculosis (strain CDC 1551 / Oshkosh).